We begin with the raw amino-acid sequence, 176 residues long: Ribosome maturation factor RimM (176 aa).

Residues Lys-93–Ile-172 enclose the PRC barrel domain.

The protein belongs to the RimM family. Binds ribosomal protein uS19.

It localises to the cytoplasm. In terms of biological role, an accessory protein needed during the final step in the assembly of 30S ribosomal subunit, possibly for assembly of the head region. Essential for efficient processing of 16S rRNA. May be needed both before and after RbfA during the maturation of 16S rRNA. It has affinity for free ribosomal 30S subunits but not for 70S ribosomes. The chain is Ribosome maturation factor RimM from Campylobacter concisus (strain 13826).